Reading from the N-terminus, the 660-residue chain is Bifunctional polymyxin resistance protein ArnA (660 aa).

The segment at 1 to 304 is formyltransferase ArnAFT; the sequence is MKTVVFAYHD…TLGLVQGSRL (304 aa). 86–88 lines the (6R)-10-formyltetrahydrofolate pocket; that stretch reads HLI. The Proton donor; for formyltransferase activity role is filled by His-104. Residues Arg-114 and 136-140 each bind (6R)-10-formyltetrahydrofolate; that span reads VKRAD. The segment at 314–660 is dehydrogenase ArnADH; that stretch reads RRTRVLILGV…RTVDLTDKPS (347 aa). NAD(+) contacts are provided by residues Asp-347 and 368-369; that span reads DI. UDP-alpha-D-glucuronate is bound by residues Ala-393, Tyr-398, and 432-433; that span reads TS. The active-site Proton acceptor; for decarboxylase activity is Glu-434. Residues Arg-460, Asn-492, 526–535, and Tyr-613 each bind UDP-alpha-D-glucuronate; that span reads KLIDGGKQKR. Arg-619 serves as the catalytic Proton donor; for decarboxylase activity.

It in the N-terminal section; belongs to the Fmt family. UDP-L-Ara4N formyltransferase subfamily. In the C-terminal section; belongs to the NAD(P)-dependent epimerase/dehydratase family. UDP-glucuronic acid decarboxylase subfamily. As to quaternary structure, homohexamer, formed by a dimer of trimers.

It catalyses the reaction UDP-alpha-D-glucuronate + NAD(+) = UDP-beta-L-threo-pentopyranos-4-ulose + CO2 + NADH. The enzyme catalyses UDP-4-amino-4-deoxy-beta-L-arabinose + (6R)-10-formyltetrahydrofolate = UDP-4-deoxy-4-formamido-beta-L-arabinose + (6S)-5,6,7,8-tetrahydrofolate + H(+). The protein operates within nucleotide-sugar biosynthesis; UDP-4-deoxy-4-formamido-beta-L-arabinose biosynthesis; UDP-4-deoxy-4-formamido-beta-L-arabinose from UDP-alpha-D-glucuronate: step 1/3. It participates in nucleotide-sugar biosynthesis; UDP-4-deoxy-4-formamido-beta-L-arabinose biosynthesis; UDP-4-deoxy-4-formamido-beta-L-arabinose from UDP-alpha-D-glucuronate: step 3/3. Its pathway is bacterial outer membrane biogenesis; lipopolysaccharide biosynthesis. Its function is as follows. Bifunctional enzyme that catalyzes the oxidative decarboxylation of UDP-glucuronic acid (UDP-GlcUA) to UDP-4-keto-arabinose (UDP-Ara4O) and the addition of a formyl group to UDP-4-amino-4-deoxy-L-arabinose (UDP-L-Ara4N) to form UDP-L-4-formamido-arabinose (UDP-L-Ara4FN). The modified arabinose is attached to lipid A and is required for resistance to polymyxin and cationic antimicrobial peptides. The protein is Bifunctional polymyxin resistance protein ArnA of Escherichia coli O157:H7.